Here is an 89-residue protein sequence, read N- to C-terminus: Cell division topological specificity factor (89 aa).

This sequence belongs to the MinE family.

Prevents the cell division inhibition by proteins MinC and MinD at internal division sites while permitting inhibition at polar sites. This ensures cell division at the proper site by restricting the formation of a division septum at the midpoint of the long axis of the cell. The chain is Cell division topological specificity factor from Proteus mirabilis (strain HI4320).